The chain runs to 336 residues: tRNA (guanine(37)-N(1))-methyltransferase Trm5b (336 aa).

S-adenosyl-L-methionine is bound by residues R186, 223-224 (DI), 251-252 (DV), and N265.

This sequence belongs to the class I-like SAM-binding methyltransferase superfamily. TRM5/TYW2 family. In terms of assembly, monomer.

The protein localises to the cytoplasm. It carries out the reaction guanosine(37) in tRNA + S-adenosyl-L-methionine = N(1)-methylguanosine(37) in tRNA + S-adenosyl-L-homocysteine + H(+). Specifically methylates the N1 position of guanosine-37 in various tRNAs. This Methanocaldococcus jannaschii (strain ATCC 43067 / DSM 2661 / JAL-1 / JCM 10045 / NBRC 100440) (Methanococcus jannaschii) protein is tRNA (guanine(37)-N(1))-methyltransferase Trm5b (trm5b).